Here is a 446-residue protein sequence, read N- to C-terminus: Coiled-coil domain-containing protein 112 (446 aa).

2 coiled-coil regions span residues 23 to 116 (LEEL…RKID) and 219 to 400 (ERKK…NVSR). Disordered regions lie at residues 247–277 (NNTPMLFHNKPEDNQKQKEEQRKKQKLAVEA) and 394–430 (VENNVSRDPSRLYKPTKGWEERTKKIGPTGSGPLLHI). Residues 255 to 268 (NKPEDNQKQKEEQR) show a composition bias toward basic and acidic residues.

Its subcellular location is the cytoplasm. The protein resides in the cytoskeleton. The protein localises to the microtubule organizing center. It is found in the centrosome. It localises to the centriolar satellite. The chain is Coiled-coil domain-containing protein 112 (CCDC112) from Macaca fascicularis (Crab-eating macaque).